The sequence spans 278 residues: Nucleotide-binding protein Tbd_0529 (278 aa).

8 to 15 (GLSGSGKS) serves as a coordination point for ATP. Position 57 to 60 (57 to 60 (DARS)) interacts with GTP.

This sequence belongs to the RapZ-like family.

Functionally, displays ATPase and GTPase activities. In Thiobacillus denitrificans (strain ATCC 25259 / T1), this protein is Nucleotide-binding protein Tbd_0529.